A 310-amino-acid polypeptide reads, in one-letter code: Isoflavone reductase homolog P3 (310 aa).

NADP(+) is bound by residues 12–18, Arg37, and Lys46; that span reads GGTGYIG. Lys134 acts as the Proton acceptor in catalysis. Position 138 (Arg138) interacts with NADP(+).

Belongs to the NmrA-type oxidoreductase family. Isoflavone reductase subfamily.

It is found in the cytoplasm. The polypeptide is Isoflavone reductase homolog P3 (Arabidopsis thaliana (Mouse-ear cress)).